Consider the following 95-residue polypeptide: Aspartyl/glutamyl-tRNA(Asn/Gln) amidotransferase subunit C (95 aa).

This sequence belongs to the GatC family. Heterotrimer of A, B and C subunits.

It carries out the reaction L-glutamyl-tRNA(Gln) + L-glutamine + ATP + H2O = L-glutaminyl-tRNA(Gln) + L-glutamate + ADP + phosphate + H(+). The catalysed reaction is L-aspartyl-tRNA(Asn) + L-glutamine + ATP + H2O = L-asparaginyl-tRNA(Asn) + L-glutamate + ADP + phosphate + 2 H(+). In terms of biological role, allows the formation of correctly charged Asn-tRNA(Asn) or Gln-tRNA(Gln) through the transamidation of misacylated Asp-tRNA(Asn) or Glu-tRNA(Gln) in organisms which lack either or both of asparaginyl-tRNA or glutaminyl-tRNA synthetases. The reaction takes place in the presence of glutamine and ATP through an activated phospho-Asp-tRNA(Asn) or phospho-Glu-tRNA(Gln). The sequence is that of Aspartyl/glutamyl-tRNA(Asn/Gln) amidotransferase subunit C from Pseudomonas fluorescens (strain ATCC BAA-477 / NRRL B-23932 / Pf-5).